Here is a 639-residue protein sequence, read N- to C-terminus: Chaperone protein DnaK (639 aa).

Thr195 is subject to Phosphothreonine; by autocatalysis. Positions 601–618 (NAAAGAAPAGEPAPGEPQ) are enriched in low complexity. A disordered region spans residues 601–639 (NAAAGAAPAGEPAPGEPQAEQKKDDGVIDAEYVDVDEKK). A compositionally biased stretch (acidic residues) spans 627–639 (VIDAEYVDVDEKK).

This sequence belongs to the heat shock protein 70 family.

Its function is as follows. Acts as a chaperone. This is Chaperone protein DnaK from Acidobacterium capsulatum (strain ATCC 51196 / DSM 11244 / BCRC 80197 / JCM 7670 / NBRC 15755 / NCIMB 13165 / 161).